Consider the following 82-residue polypeptide: MTDKIRTLQGRVISDKMEKSITVAIERKVKHPIYGKIIKRTTKLHVHDENNECKAGDLVEIRECRPLSKTKSWTLVAILEKA.

It belongs to the universal ribosomal protein uS17 family. As to quaternary structure, part of the 30S ribosomal subunit.

Its function is as follows. One of the primary rRNA binding proteins, it binds specifically to the 5'-end of 16S ribosomal RNA. The sequence is that of Small ribosomal subunit protein uS17 from Aeromonas salmonicida (strain A449).